Consider the following 320-residue polypeptide: Porphobilinogen deaminase (320 aa).

Cysteine 251 carries the S-(dipyrrolylmethanemethyl)cysteine modification.

This sequence belongs to the HMBS family. As to quaternary structure, monomer. The cofactor is dipyrromethane.

It catalyses the reaction 4 porphobilinogen + H2O = hydroxymethylbilane + 4 NH4(+). It functions in the pathway porphyrin-containing compound metabolism; protoporphyrin-IX biosynthesis; coproporphyrinogen-III from 5-aminolevulinate: step 2/4. Tetrapolymerization of the monopyrrole PBG into the hydroxymethylbilane pre-uroporphyrinogen in several discrete steps. This Phenylobacterium zucineum (strain HLK1) protein is Porphobilinogen deaminase.